We begin with the raw amino-acid sequence, 158 residues long: Small ribosomal subunit protein uS7 (158 aa).

The protein belongs to the universal ribosomal protein uS7 family. In terms of assembly, part of the 30S ribosomal subunit. Contacts proteins S9 and S11.

In terms of biological role, one of the primary rRNA binding proteins, it binds directly to 16S rRNA where it nucleates assembly of the head domain of the 30S subunit. Is located at the subunit interface close to the decoding center, probably blocks exit of the E-site tRNA. This is Small ribosomal subunit protein uS7 from Leptospira biflexa.